Consider the following 352-residue polypeptide: C-C chemokine receptor type 5 (352 aa).

Over methionine 1–alanine 30 the chain is Extracellular. Tyrosine 3 is modified (sulfotyrosine). A glycan (O-linked (GalNAc...) serine) is linked at serine 6. Sulfotyrosine occurs at positions 10 and 14. 2 disulfides stabilise this stretch: cysteine 20–cysteine 269 and cysteine 101–cysteine 178. A helical membrane pass occupies residues arginine 31–cysteine 58. Topologically, residues lysine 59 to tyrosine 68 are cytoplasmic. The helical transmembrane segment at leucine 69–tyrosine 89 threads the bilayer. Over alanine 90–glutamine 102 the chain is Extracellular. A helical membrane pass occupies residues leucine 103–isoleucine 124. Topologically, residues aspartate 125–threonine 141 are cytoplasmic. Residues valine 142–phenylalanine 166 form a helical membrane-spanning segment. Residues threonine 167–isoleucine 198 lie on the Extracellular side of the membrane. A helical membrane pass occupies residues valine 199–isoleucine 218. Residues lysine 219 to arginine 235 are Cytoplasmic-facing. Residues leucine 236–phenylalanine 260 form a helical membrane-spanning segment. The Extracellular portion of the chain corresponds to glutamine 261–glutamine 277. A helical transmembrane segment spans residues alanine 278–glycine 301. Topologically, residues glutamate 302–leucine 352 are cytoplasmic. S-palmitoyl cysteine attachment occurs at residues cysteine 321 and cysteine 324. Serine 336, serine 337, serine 342, and serine 349 each carry phosphoserine; by BARK1.

Belongs to the G-protein coupled receptor 1 family. As to quaternary structure, interacts with PRAF2. Efficient ligand binding to CCL3/MIP-1alpha and CCL4/MIP-1beta requires sulfation, O-glycosylation and sialic acid modifications. Glycosylation on Ser-6 is required for efficient binding of CCL4. Interacts with GRK2. Interacts with ARRB1 and ARRB2. Interacts with CNIH4. Interacts with S100A4; this interaction stimulates T-lymphocyte chemotaxis. Sulfated on at least 2 of the N-terminal tyrosines. Sulfation is required for efficient binding of the chemokines, CCL3 and CCL4. In terms of processing, O-glycosylated, but not N-glycosylated. Ser-6 appears to be the major site. Also sialylated glycans present which contribute to chemokine binding. Ser-17 may also be glycosylated and, if so, with small moieties such as a T-antigen. Post-translationally, palmitoylation in the C-terminal is important for cell surface expression. Phosphorylation on serine residues in the C-terminal is stimulated by binding CC chemokines especially by APO-RANTES.

Its subcellular location is the cell membrane. In terms of biological role, receptor for a number of inflammatory CC-chemokines including CCL3/MIP-1-alpha, CCL4/MIP-1-beta and RANTES and subsequently transduces a signal by increasing the intracellular calcium ion level. May play a role in the control of granulocytic lineage proliferation or differentiation. Participates in T-lymphocyte migration to the infection site by acting as a chemotactic receptor. This is C-C chemokine receptor type 5 (CCR5) from Bos taurus (Bovine).